The chain runs to 295 residues: MAKVKVAILGSGNIGTDLMIKLERSSHLELTAMIGIDPESDGLKKAKTKGYYVFDGGLKQFLSEASELADLVFDATSAKAHVRHAKALREAGKMVIDLTPAAVGPYVVPSVNLGDYLEESNLNLITCGGQATIPIVHAINRVAQVHYSEIVATIASKSAGPGTRANIDEFTQTTAHGLEAIGGAKKGKAIIILNPAEPPIIMRNAVYALVECEQMDEVAIARSVQETVAYIQSYVPGYRLRTEPLFEGNKVTVFVEVEGAGDYLPTYSGNLDIMTATAIKVAEEWVQHRVKAASV.

11-14 serves as a coordination point for NAD(+); the sequence is SGNI. The active-site Acyl-thioester intermediate is the cysteine 127. NAD(+) is bound by residues 158 to 166 and asparagine 270; that span reads SAGPGTRAN.

It belongs to the acetaldehyde dehydrogenase family.

It carries out the reaction acetaldehyde + NAD(+) + CoA = acetyl-CoA + NADH + H(+). The sequence is that of Acetaldehyde dehydrogenase (nbaJ) from Geobacillus thermodenitrificans (strain NG80-2).